We begin with the raw amino-acid sequence, 113 residues long: MPAPRYRSRSCRRVYKRTPGGRTVIHFEKKIPNWPKCGACGRRLNGVMRGRNVELKNAPKTQKRPNRPYGGVLCPECARKLIKDKVRYKFWERKREQPWLPVLPDEEPPEPEE.

It belongs to the eukaryotic ribosomal protein eL34 family.

The polypeptide is Large ribosomal subunit protein eL34 (Methanopyrus kandleri (strain AV19 / DSM 6324 / JCM 9639 / NBRC 100938)).